The primary structure comprises 648 residues: Threonine--tRNA ligase (648 aa).

One can recognise a TGS domain in the interval 1–63; that stretch reads MAQISLTFPD…TQDAAIAIHT (63 aa). A catalytic region spans residues 247–544; it reads DHRKLGREMN…LIEEHAGKLP (298 aa). Zn(2+) contacts are provided by C344, H395, and H521.

Belongs to the class-II aminoacyl-tRNA synthetase family. Homodimer. It depends on Zn(2+) as a cofactor.

It localises to the cytoplasm. It catalyses the reaction tRNA(Thr) + L-threonine + ATP = L-threonyl-tRNA(Thr) + AMP + diphosphate + H(+). Catalyzes the attachment of threonine to tRNA(Thr) in a two-step reaction: L-threonine is first activated by ATP to form Thr-AMP and then transferred to the acceptor end of tRNA(Thr). Also edits incorrectly charged L-seryl-tRNA(Thr). This is Threonine--tRNA ligase from Ruegeria sp. (strain TM1040) (Silicibacter sp.).